Reading from the N-terminus, the 1396-residue chain is DNA-directed RNA polymerase subunit beta' (1396 aa).

Zn(2+) contacts are provided by Cys-72, Cys-74, Cys-87, and Cys-90. The Mg(2+) site is built by Asp-463, Asp-465, and Asp-467. 4 residues coordinate Zn(2+): Cys-814, Cys-889, Cys-896, and Cys-899.

It belongs to the RNA polymerase beta' chain family. The RNAP catalytic core consists of 2 alpha, 1 beta, 1 beta' and 1 omega subunit. When a sigma factor is associated with the core the holoenzyme is formed, which can initiate transcription. The cofactor is Mg(2+). It depends on Zn(2+) as a cofactor.

It catalyses the reaction RNA(n) + a ribonucleoside 5'-triphosphate = RNA(n+1) + diphosphate. Functionally, DNA-dependent RNA polymerase catalyzes the transcription of DNA into RNA using the four ribonucleoside triphosphates as substrates. This is DNA-directed RNA polymerase subunit beta' from Chlamydia trachomatis serovar L2 (strain ATCC VR-902B / DSM 19102 / 434/Bu).